Consider the following 239-residue polypeptide: Sugar fermentation stimulation protein homolog (239 aa).

This sequence belongs to the SfsA family.

This chain is Sugar fermentation stimulation protein homolog, found in Caulobacter vibrioides (strain ATCC 19089 / CIP 103742 / CB 15) (Caulobacter crescentus).